A 1416-amino-acid polypeptide reads, in one-letter code: MKAYINRTATFAWSPATYESDSPLIATGTVAGALDESFSNESLLELWKPFYAASADANIDADAKPLASISTSARFNRLAWGYANPSRPKGLLAAGLENGELGIWDADKVLAAAAESDAQVIKNTTHTGPVRGLDFNPLQPNLLSSGAVAGEIFIWDLNSPAKPYSPGARSSKLDEITSLAWNCQVPHVLATSSSSGYTVVWDLRGKREVVALQYGGGAGTAVGSLGINAGSALAAGGRRGMSAVAWHPDTPTRLVTASEDDSSPVIMLWDLRNSRAPEKIMTGHDKGILSLSWCKQDADLLLSCGKDNRSICWNPQTCDIVGELPSSSNWSFEVQWSPRNPGMLATASFDGKIGVHSLQSTNAPEPDAPATQQLNEDSDFFNQATAPQTTSKGLSLKQPPKWLRRPVSAVFGFGGQLVSSGGPSSKPFTPTVHLRDFVSEPSIVERATKLQHALDGQSLAEFCAQRSQDPSTRPDDIANWKALQTLFRADSRDELVALLGFSKEDIAQKVSQSIAAFKTNGTAAVEPEVTPVTNPIDEPELTKPVTSADDGADAVEAANEIVEPAAIATEPAPEVEANDIDEPGLFGDDAAGAANNDASDFFNQISAGQTPAVRSALPSHLLSESQPHIHSSAATIGSPAPSSVASESIRPSTFKIYPSEESEADKLITRALVLGEFESAVSLCINSDRFADAFLLAVRGGEELLAKTQKAYFEKRTAQLPYLRLFQSIVSDDLTDVVQNADLGEWQEIFVVLCTFSKQDEFSNLTEQLGQRLEFQYSLARNSDITQAKEHRKNAVLCYLAAGKLEKVAGMWIDEMKEEELALRSNTKNADESHKGTLYSARAEALQTFMEKITVFQSAVGYVDVDLQQPTQDSIVAETGARSYKLAPLYDRIHEYVELLADQGLISPALRFANQTPADYRPHGPADQSATATALKQRLLKAEIARPKTDTAASSSTNNVVAAASASASSYAAAPASNGYAPYDPYGQSTSSSVPTVPSVPAVPAVNTYQDPYAAAAPSPSVAAPQPPTQSRYAPAVPAPVPTAMQPEPVQTNAYGAYGAQSYQSAYQPAQPMIPAAPAFGASSYGQQQHQQQLPPPPPLKRDQSGWNDVPEGLAAPKRTPSAMSQHKSANAITSPFPNAPAQAPSPYGGAPGAPPTGPPRGATPSRGMMSPPPQGPPSGPGLAQQRVGPPGVRPPPMGPAQGQPRPGQQQPGPPSQAAPSAGPYARPPAGPGAPSANGMQQQQQPGAPPVGPGAGALRPPGQALPGAPGLAGPPGVPQRSATPGGGAGAPSRSATPGARGASQMKYPPGDRSHIPENQRPIQHALQREVARLKATAPPAQKRMIDDTERRINLLLDHLNCGTIDAKTVGGLMQIVAAIEARNKQAALNIHLQLVTSSSGDVAAGLVGVKMIISRL.

WD repeat units follow at residues 8–48, 70–114, 125–165, 171–211, 236–279, 283–323, and 326–366; these read TATF…ELWK, STSA…AAAA, THTG…KPYS, SKLD…EVVA, GGRR…APEK, GHDK…IVGE, and SSSN…APEP. One copy of the WD 8; interaction with SEC13 repeat lies at 410–435; that stretch reads VFGFGGQLVSSGGPSSKPFTPTVHLR. Residues 1015 to 1024 show a composition bias toward low complexity; that stretch reads AAAPSPSVAA. Disordered stretches follow at residues 1015 to 1040 and 1078 to 1317; these read AAAPSPSVAAPQPPTQSRYAPAVPAP and PAFG…HIPE. Polar residues predominate over residues 1122 to 1137; that stretch reads SAMSQHKSANAITSPF. 2 stretches are compositionally biased toward low complexity: residues 1140 to 1149 and 1160 to 1170; these read APAQAPSPYG and PRGATPSRGMM. Positions 1171 to 1180 are enriched in pro residues; the sequence is SPPPQGPPSG. Low complexity-rich tracts occupy residues 1200 to 1211, 1233 to 1246, 1256 to 1271, and 1290 to 1299; these read PAQGQPRPGQQQ, GAPSANGMQQQQQP, GALRPPGQALPGAPGL, and APSRSATPGA.

The protein belongs to the WD repeat SEC31 family. The COPII coat is composed of at least 5 proteins: the SEC23/24 complex, the SEC13/31 complex, and the protein SAR1. SEC13 and SEC31 make a 2:2 tetramer that forms the edge element of the COPII outer coat. The tetramer self-assembles in multiple copies to form the complete polyhedral cage. Interacts (via WD 8) with SEC13.

It is found in the cytoplasmic vesicle. The protein localises to the COPII-coated vesicle membrane. The protein resides in the endoplasmic reticulum membrane. Its function is as follows. Component of the coat protein complex II (COPII) which promotes the formation of transport vesicles from the endoplasmic reticulum (ER). The coat has two main functions, the physical deformation of the endoplasmic reticulum membrane into vesicles and the selection of cargo molecules. This is Protein transport protein SEC31 (SEC31) from Mycosarcoma maydis (Corn smut fungus).